Consider the following 502-residue polypeptide: ATP synthase subunit alpha (502 aa).

Positions 115–135 are disordered; it reads VDGLGPINTTNTRPIESPAPG. Residue 169–176 coordinates ATP; that stretch reads GDRQTGKT.

Belongs to the ATPase alpha/beta chains family. F-type ATPases have 2 components, CF(1) - the catalytic core - and CF(0) - the membrane proton channel. CF(1) has five subunits: alpha(3), beta(3), gamma(1), delta(1), epsilon(1). CF(0) has three main subunits: a(1), b(2) and c(9-12). The alpha and beta chains form an alternating ring which encloses part of the gamma chain. CF(1) is attached to CF(0) by a central stalk formed by the gamma and epsilon chains, while a peripheral stalk is formed by the delta and b chains.

The protein localises to the cell membrane. The enzyme catalyses ATP + H2O + 4 H(+)(in) = ADP + phosphate + 5 H(+)(out). In terms of biological role, produces ATP from ADP in the presence of a proton gradient across the membrane. The alpha chain is a regulatory subunit. This Bacillus cereus (strain G9842) protein is ATP synthase subunit alpha.